A 438-amino-acid chain; its full sequence is Adenylosuccinate synthetase (438 aa).

GTP-binding positions include 13-19 (GDEGKGK) and 41-43 (GHT). The active-site Proton acceptor is Asp14. Residues Asp14 and Gly41 each coordinate Mg(2+). Residues 14-17 (DEGK), 39-42 (NAGH), Thr130, Arg144, Gln225, Thr240, and Arg312 contribute to the IMP site. The Proton donor role is filled by His42. A substrate-binding site is contributed by 308–314 (ATTGRQR). GTP-binding positions include Arg314, 340–342 (KLD), and 422–424 (STG).

This sequence belongs to the adenylosuccinate synthetase family. In terms of assembly, homodimer. Mg(2+) serves as cofactor.

Its subcellular location is the cytoplasm. It carries out the reaction IMP + L-aspartate + GTP = N(6)-(1,2-dicarboxyethyl)-AMP + GDP + phosphate + 2 H(+). Its pathway is purine metabolism; AMP biosynthesis via de novo pathway; AMP from IMP: step 1/2. Its function is as follows. Plays an important role in the de novo pathway of purine nucleotide biosynthesis. Catalyzes the first committed step in the biosynthesis of AMP from IMP. The sequence is that of Adenylosuccinate synthetase from Ruthia magnifica subsp. Calyptogena magnifica.